Consider the following 277-residue polypeptide: NLP effector protein Pc109174 (277 aa).

A signal peptide spans 1–19 (MNLVPALVLLLALAQTVLG). The short motif at 119-125 (KSRHLWA) is the Hepta-peptide GHRHDWE motif element. A glycan (N-linked (GlcNAc...) asparagine) is linked at asparagine 199.

The protein belongs to the Necrosis inducing protein (NPP1) family.

It localises to the secreted. Secreted effector that contributes strongly to virulence during infection by P.capsici. Induces cell death in the Solanaceae, including hot pepper. The chain is NLP effector protein Pc109174 from Phytophthora capsici.